The primary structure comprises 314 residues: Malate dehydrogenase (314 aa).

Residues 11–16 (GSGNIG) and aspartate 35 contribute to the NAD(+) site. Substrate-binding residues include arginine 84 and arginine 90. NAD(+) is bound by residues asparagine 97 and 120 to 122 (ITN). Substrate-binding residues include asparagine 122 and arginine 153. The active-site Proton acceptor is the histidine 177.

This sequence belongs to the LDH/MDH superfamily. MDH type 3 family.

The catalysed reaction is (S)-malate + NAD(+) = oxaloacetate + NADH + H(+). Its function is as follows. Catalyzes the reversible oxidation of malate to oxaloacetate. In Rickettsia prowazekii (strain Madrid E), this protein is Malate dehydrogenase.